The chain runs to 392 residues: Probable glucan endo-1,6-beta-glucosidase B (392 aa).

The N-terminal stretch at 1 to 18 is a signal peptide; that stretch reads MKVTRLAVLNTLATLTVA. Asn-31 carries N-linked (GlcNAc...) asparagine glycosylation. Catalysis depends on Glu-220, which acts as the Proton donor. Catalysis depends on Glu-322, which acts as the Nucleophile.

Belongs to the glycosyl hydrolase 5 (cellulase A) family.

The protein resides in the secreted. The enzyme catalyses Random hydrolysis of (1-&gt;6)-linkages in (1-&gt;6)-beta-D-glucans.. Functionally, beta-glucanases participate in the metabolism of beta-glucan, the main structural component of the cell wall. Acts on lutean, pustulan and 1,6-oligo-beta-D-glucosides. The protein is Probable glucan endo-1,6-beta-glucosidase B (exgB) of Aspergillus flavus (strain ATCC 200026 / FGSC A1120 / IAM 13836 / NRRL 3357 / JCM 12722 / SRRC 167).